A 241-amino-acid chain; its full sequence is Ribonuclease 3 (241 aa).

The 130-residue stretch at 8-137 folds into the RNase III domain; that stretch reads LTLLKNRLGI…LLGAVYLDQG (130 aa). Glu50 serves as a coordination point for Mg(2+). The active site involves Asp54. The Mg(2+) site is built by Asp123 and Glu126. The active site involves Glu126. In terms of domain architecture, DRBM spans 164-233; that stretch reads DYKTELQELV…AKKALMKSDL (70 aa). The disordered stretch occupies residues 214–241; sequence RSKKEAEQQAAKKALMKSDLGSACNHKK.

This sequence belongs to the ribonuclease III family. Homodimer. It depends on Mg(2+) as a cofactor.

The protein localises to the cytoplasm. It carries out the reaction Endonucleolytic cleavage to 5'-phosphomonoester.. Its function is as follows. Digests double-stranded RNA. Involved in the processing of primary rRNA transcript to yield the immediate precursors to the large and small rRNAs (23S and 16S). Processes some mRNAs, and tRNAs when they are encoded in the rRNA operon. Processes pre-crRNA and tracrRNA of type II CRISPR loci if present in the organism. In Pelotomaculum thermopropionicum (strain DSM 13744 / JCM 10971 / SI), this protein is Ribonuclease 3.